We begin with the raw amino-acid sequence, 116 residues long: Small ribosomal subunit protein bS16 (116 aa).

This sequence belongs to the bacterial ribosomal protein bS16 family.

The sequence is that of Small ribosomal subunit protein bS16 from Chlamydia muridarum (strain MoPn / Nigg).